Consider the following 208-residue polypeptide: Adult-specific cuticular protein ACP-20 (208 aa).

Positions 1–17 are cleaved as a signal peptide; it reads MLVQITALAFLAGIASA. Copy 1 of the repeat occupies 34-43; the sequence is GLGGGLGGVG. Positions 34 to 180 are 2 X 10 AA repeats; it reads GLGGGLGGVG…GLGGGLGGVG (147 aa). The 72-residue stretch at 64–135 folds into the Chitin-binding type R&amp;R domain; the sequence is PAHYQFKYGV…VGHAVHPQVL (72 aa). Repeat unit 2 spans residues 171–180; that stretch reads GLGGGLGGVG.

As to expression, epidermal regions synthesizing hard cuticle.

In terms of biological role, cuticular proteins play a significant role in determining the physical properties of cuticles. This is Adult-specific cuticular protein ACP-20 (ACP20) from Tenebrio molitor (Yellow mealworm beetle).